A 266-amino-acid chain; its full sequence is Cell wall synthesis protein Wag31 (266 aa).

Positions 31–64 form a coiled coil; the sequence is FLDLVENELTQLIEENSDLRQRIEELDHELAAGG. Thr-77 carries the phosphothreonine modification. Residues 152–203 adopt a coiled-coil conformation; it reads TAEATVAEAQQRADAMLADAQTRSEVQSRQAQEKADALQAEAERKHSEIMGA. The segment at 239–266 is disordered; the sequence is ELGQRGSAAPVDSNADAGGFDQFNRGNN.

This sequence belongs to the DivIVA family. Forms homooligomers. Phosphorylated by PknA.

The protein resides in the cytoplasm. Its function is as follows. Important for maintaining cell shape and cell wall integrity by localizing peptidoglycan synthesis to the cell poles. In Mycobacterium leprae (strain TN), this protein is Cell wall synthesis protein Wag31 (wag31).